We begin with the raw amino-acid sequence, 206 residues long: Ras-related protein Rab-7b (206 aa).

Residue 15–22 participates in GTP binding; the sequence is GDSGVGKT. Phosphoserine is present on residues Ser-17 and Ser-23. A phosphothreonine mark is found at Thr-34, Thr-40, and Thr-64. GTP contacts are provided by residues 34 to 40 and 63 to 67; these read TQQYRAT and DTAGQ. The Effector region motif lies at 37–45; that stretch reads YRATVGADF. Ser-72 is subject to Phosphoserine. Tyr-78 and Tyr-88 each carry phosphotyrosine. Residues 125-128 and 157-158 each bind GTP; these read NKLD and AK. S-geranylgeranyl cysteine attachment occurs at residues Cys-205 and Cys-206.

Belongs to the small GTPase superfamily. Rab family. Post-translationally, glycosylated.

It localises to the cytoplasm. It is found in the cytoskeleton. This is Ras-related protein Rab-7b from Paramecium octaurelia.